The sequence spans 317 residues: Small ribosomal subunit protein RACK1 (317 aa).

7 WD repeats span residues 13–44 (GHSG…IMWK), 61–91 (GHSH…RLWD), 103–133 (GHTK…KLWN), 146–178 (SHTE…KVWN), 190–220 (GHTG…MLWD), 231–260 (DGGD…KIWD), and 281–311 (AEPP…RVWQ).

It belongs to the WD repeat G protein beta family. Ribosomal protein RACK1 subfamily.

Its subcellular location is the cytoplasm. Its function is as follows. Involved in the recruitment, assembly and/or regulation of a variety of signaling molecules. Interacts with a wide variety of proteins and plays a role in many cellular processes. Required for VANGL2 membrane localization, inhibits Wnt signaling and regulates cellular polarization and oriented cell division during gastrulation. In Danio rerio (Zebrafish), this protein is Small ribosomal subunit protein RACK1 (gnb2l1).